The chain runs to 167 residues: MVKILLLALVFSLAHAQDFAELQGKWYTIVIAADNLEKIEEGGPLRFYFRHIDCYKNCSEMEITFYVITNNQCSKTTVIGYLKGNGTYQTQFEGNNIFQPLYITSDKIFFTNKNMDRAGQETNMIVVAGKGNALTPEENEILVQFAHEKKIPVENILNILATDTCPE.

Positions 1–16 are cleaved as a signal peptide; sequence MVKILLLALVFSLAHA. Position 17 is a pyrrolidone carboxylic acid (Q17). 2 disulfides stabilise this stretch: C54–C58 and C73–C165. N-linked (GlcNAc...) asparagine glycans are attached at residues N57 and N85.

Belongs to the calycin superfamily. Lipocalin family. Expressed in the vagina, uterus, and Bartholin's glands of female hamsters. Secreted in vaginal discharge.

The protein resides in the secreted. In terms of biological role, acts as an aphrodisiac pheromone, reliably eliciting copulatory behavior from male hamster. This Cricetus cricetus (Black-bellied hamster) protein is Aphrodisin.